Reading from the N-terminus, the 266-residue chain is ATP synthase subunit a (266 aa).

6 helical membrane passes run 38–58 (KQML…VLAA), 99–119 (LLFS…IPLI), 126–146 (HVGG…AIGI), 162–182 (GVPW…NFVV), 191–211 (LFAT…GIEY), and 224–244 (SVLV…IMVL).

The protein belongs to the ATPase A chain family. As to quaternary structure, F-type ATPases have 2 components, CF(1) - the catalytic core - and CF(0) - the membrane proton channel. CF(1) has five subunits: alpha(3), beta(3), gamma(1), delta(1), epsilon(1). CF(0) has three main subunits: a(1), b(2) and c(9-12). The alpha and beta chains form an alternating ring which encloses part of the gamma chain. CF(1) is attached to CF(0) by a central stalk formed by the gamma and epsilon chains, while a peripheral stalk is formed by the delta and b chains.

It localises to the cell membrane. In terms of biological role, key component of the proton channel; it plays a direct role in the translocation of protons across the membrane. The sequence is that of ATP synthase subunit a from Pseudarthrobacter chlorophenolicus (strain ATCC 700700 / DSM 12829 / CIP 107037 / JCM 12360 / KCTC 9906 / NCIMB 13794 / A6) (Arthrobacter chlorophenolicus).